The primary structure comprises 122 residues: Ribonuclease P protein component (122 aa).

The protein belongs to the RnpA family. As to quaternary structure, consists of a catalytic RNA component (M1 or rnpB) and a protein subunit.

The enzyme catalyses Endonucleolytic cleavage of RNA, removing 5'-extranucleotides from tRNA precursor.. Functionally, RNaseP catalyzes the removal of the 5'-leader sequence from pre-tRNA to produce the mature 5'-terminus. It can also cleave other RNA substrates such as 4.5S RNA. The protein component plays an auxiliary but essential role in vivo by binding to the 5'-leader sequence and broadening the substrate specificity of the ribozyme. In Lactobacillus gasseri (strain ATCC 33323 / DSM 20243 / BCRC 14619 / CIP 102991 / JCM 1131 / KCTC 3163 / NCIMB 11718 / NCTC 13722 / AM63), this protein is Ribonuclease P protein component.